The primary structure comprises 1214 residues: SWI/SNF complex subunit SMARCC2 (1214 aa).

The marR-like, BRCT and chromo domains module stretch occupies residues 1 to 274 (MAVRKKDGGP…PVSRRKKISA (274 aa)). The 127-residue stretch at 10 to 136 (PNVKYYEAAD…IEKSLVQNNC (127 aa)) folds into the MarR-like domain. The region spanning 140 to 183 (PNIFLCPEIEPKLLGKLKDIIKRHQGTVTEDKNNASHVVYPVPG) is the BRCT; N-terminus domain. In terms of domain architecture, Chromo spans 189-217 (EWVRPVMKRDKQVLLHWGYYPDSYDTWIP). One can recognise a BRCT; C-terminus domain in the interval 233–257 (KPRKVHAKWILDTDTFNEWMNEEDY). Residues 257–413 (YEVNDDKNPV…GEQTKNPDLH (157 aa)) are disordered. Over residues 275-284 (KTLTDEVNSP) the composition is skewed to polar residues. Phosphoserine occurs at positions 283, 286, 302, 304, and 306. At lysine 312 the chain carries N6-(ADP-ribosyl)lysine. Lysine 326 carries the N6-acetyllysine modification. Residues 331 to 344 (HREEEQEDLTKDMD) are compositionally biased toward basic and acidic residues. Phosphoserine is present on residues serine 347 and serine 387. Residues 379 to 398 (DLDEQEDESMETTGKDEDEN) show a composition bias toward acidic residues. In terms of domain architecture, SWIRM spans 424 to 521 (IIIPSYAAWF…YQVDAESRPT (98 aa)). Phosphothreonine is present on threonine 548. Glycyl lysine isopeptide (Lys-Gly) (interchain with G-Cter in SUMO2) cross-links involve residues lysine 564, lysine 566, lysine 568, and lysine 592. Residues 596–647 (SATREWTEQETLLLLEALEMYKDDWNKVSEHVGSRTQDECILHFLRLPIEDP) form the SANT domain. Lysine 704 participates in a covalent cross-link: Glycyl lysine isopeptide (Lys-Gly) (interchain with G-Cter in SUMO2). The segment at 724–852 (KVTGKADPAF…GERKTKVERD (129 aa)) is disordered. Basic and acidic residues-rich tracts occupy residues 747–777 (EPERIEESGNDEARVEGQATDEKKEPKEPRE) and 784–852 (EEAK…VERD). Lysine 787 participates in a covalent cross-link: Glycyl lysine isopeptide (Lys-Gly) (interchain with G-Cter in SUMO2). Residue serine 813 is modified to Phosphoserine. Residue lysine 848 forms a Glycyl lysine isopeptide (Lys-Gly) (interchain with G-Cter in SUMO2) linkage. Residues 907-934 (EELETIMDREREALEYQRQQLLADRQAF) are a coiled coil. Disordered stretches follow at residues 947 to 983 (RQQHFQQMHQQQQQPPPALPPGSQPIPPTGAAGPPAV), 997 to 1092 (PAGS…PPPP), and 1182 to 1214 (LPSASPLPDPGTPLPPDPTAPSPGTVTPVPPPQ). A compositionally biased stretch (low complexity) spans 949 to 959 (QHFQQMHQQQQ). Positions 960–974 (QPPPALPPGSQPIPP) are enriched in pro residues. Positions 997-1033 (PAGSGAPPGSLGPSEQIGQAGSTAGPQQQQPAGAPQP) are enriched in low complexity. 2 stretches are compositionally biased toward pro residues: residues 1034–1051 (GAVPPGVPPPGPHGPSPF) and 1186–1202 (SPLPDPGTPLPPDPTAP).

Belongs to the SMARCC family. As to quaternary structure, component of the multiprotein chromatin-remodeling complexes SWI/SNF: SWI/SNF-A (BAF), SWI/SNF-B (PBAF) and related complexes. The canonical complex contains a catalytic subunit (either SMARCA4/BRG1/BAF190A or SMARCA2/BRM/BAF190B) and at least SMARCE1, ACTL6A/BAF53, SMARCC1/BAF155, SMARCC2/BAF170, and SMARCB1/SNF5/BAF47. Other subunits specific to each of the complexes may also be present permitting several possible combinations developmentally and tissue specific. Component of the BAF complex, which includes at least actin (ACTB), ARID1A/BAF250A, ARID1B/BAF250B, SMARCA2/BRM, SMARCA4/BRG1, ACTL6A/BAF53, ACTL6B/BAF53B, SMARCE1/BAF57, SMARCC1/BAF155, SMARCC2/BAF170, SMARCB1/SNF5/INI1, and one or more SMARCD1/BAF60A, SMARCD2/BAF60B, or SMARCD3/BAF60C. In muscle cells, the BAF complex also contains DPF3. Component of neural progenitors-specific chromatin remodeling complex (npBAF complex) composed of at least, ARID1A/BAF250A or ARID1B/BAF250B, SMARCD1/BAF60A, SMARCD3/BAF60C, SMARCA2/BRM/BAF190B, SMARCA4/BRG1/BAF190A, SMARCB1/BAF47, SMARCC1/BAF155, SMARCE1/BAF57, SMARCC2/BAF170, PHF10/BAF45A, ACTL6A/BAF53A and actin. Component of neuron-specific chromatin remodeling complex (nBAF complex) composed of at least, ARID1A/BAF250A or ARID1B/BAF250B, SMARCD1/BAF60A, SMARCD3/BAF60C, SMARCA2/BRM/BAF190B, SMARCA4/BRG1/BAF190A, SMARCB1/BAF47, SMARCC1/BAF155, SMARCE1/BAF57, SMARCC2/BAF170, DPF1/BAF45B, DPF3/BAF45C, ACTL6B/BAF53B and actin. Component of the SWI/SNF-B (PBAF) chromatin remodeling complex, at least composed of SMARCA4/BRG1, SMARCB1/BAF47/SNF5, ACTL6A/BAF53A or ACTL6B/BAF53B, SMARCE1/BAF57, SMARCD1/BAF60A, SMARCD2/BAF60B, perhaps SMARCD3/BAF60C, SMARCC1/BAF155, SMARCC2/BAF170, PBRM1/BAF180, ARID2/BAF200 and actin. May also interact with the SIN3A histone deacetylase transcription repressor complex in conjunction with SMARCA2 and SMARCA4. Interacts with SMARD1. Interacts with KDM6B. Interaction with RCOR1. Interacts with DPF2. Interacts with ERCC6. Interacts with FOS. Post-translationally, mono-ADP-ribosylation at Lys-312 by SIRT6 promotes recruitment to the enhancer region of the Heme oxygenase-1 (HO-1) locus, leading to transcription activation of the locus. Ubiquitously expressed.

It is found in the nucleus. Functionally, involved in transcriptional activation and repression of select genes by chromatin remodeling (alteration of DNA-nucleosome topology). Component of SWI/SNF chromatin remodeling complexes that carry out key enzymatic activities, changing chromatin structure by altering DNA-histone contacts within a nucleosome in an ATP-dependent manner. Can stimulate the ATPase activity of the catalytic subunit of these complexes. May be required for CoREST dependent repression of neuronal specific gene promoters in non-neuronal cells. Belongs to the neural progenitors-specific chromatin remodeling complex (npBAF complex) and the neuron-specific chromatin remodeling complex (nBAF complex). During neural development a switch from a stem/progenitor to a postmitotic chromatin remodeling mechanism occurs as neurons exit the cell cycle and become committed to their adult state. The transition from proliferating neural stem/progenitor cells to postmitotic neurons requires a switch in subunit composition of the npBAF and nBAF complexes. As neural progenitors exit mitosis and differentiate into neurons, npBAF complexes which contain ACTL6A/BAF53A and PHF10/BAF45A, are exchanged for homologous alternative ACTL6B/BAF53B and DPF1/BAF45B or DPF3/BAF45C subunits in neuron-specific complexes (nBAF). The npBAF complex is essential for the self-renewal/proliferative capacity of the multipotent neural stem cells. The nBAF complex along with CREST plays a role regulating the activity of genes essential for dendrite growth. Critical regulator of myeloid differentiation, controlling granulocytopoiesis and the expression of genes involved in neutrophil granule formation. This chain is SWI/SNF complex subunit SMARCC2 (SMARCC2), found in Homo sapiens (Human).